Consider the following 113-residue polypeptide: Ig kappa chain V-II region MOPC 511 (113 aa).

The tract at residues 1–23 (DIVITQDELSKPVTSGESVSISC) is framework-1. A disulfide bond links Cys23 and Cys93. Positions 24–39 (RSSKSLLYKDGKTYLN) are complementarity-determining-1. Residues 40–54 (WFLQGPQQSPRLLIY) are framework-2. Positions 55-61 (LMSTRAS) are complementarity-determining-2. The segment at 62–93 (GVSDRFSGSGSGTDFTLEISRVKAEDVGVYYC) is framework-3. Positions 94-102 (QQLVEYPLT) are complementarity-determining-3. The interval 103–112 (FGAGTKLELK) is framework-4.

This chain is Ig kappa chain V-II region MOPC 511, found in Mus musculus (Mouse).